Here is a 256-residue protein sequence, read N- to C-terminus: Glutamate racemase (256 aa).

Residues 11 to 12 (DS) and 43 to 44 (YG) contribute to the substrate site. Cysteine 74 serves as the catalytic Proton donor/acceptor. A substrate-binding site is contributed by 75–76 (NT). The active-site Proton donor/acceptor is cysteine 182. Position 183-184 (183-184 (TH)) interacts with substrate.

Belongs to the aspartate/glutamate racemases family.

The catalysed reaction is L-glutamate = D-glutamate. It participates in cell wall biogenesis; peptidoglycan biosynthesis. Provides the (R)-glutamate required for cell wall biosynthesis. This is Glutamate racemase from Leptospira interrogans serogroup Icterohaemorrhagiae serovar copenhageni (strain Fiocruz L1-130).